The sequence spans 32 residues: Photosystem I reaction center subunit XII (32 aa).

A helical transmembrane segment spans residues 10–27 (VVALVSAFVTGILALRLG).

Belongs to the PsaM family.

The protein localises to the plastid. It localises to the chloroplast thylakoid membrane. This chain is Photosystem I reaction center subunit XII, found in Staurastrum punctulatum (Green alga).